A 198-amino-acid polypeptide reads, in one-letter code: Molybdenum cofactor guanylyltransferase (198 aa).

Residues 14-16 (LAG), K27, D73, and D103 each bind GTP. D103 serves as a coordination point for Mg(2+).

It belongs to the MobA family. In terms of assembly, monomer. Requires Mg(2+) as cofactor.

The protein resides in the cytoplasm. It catalyses the reaction Mo-molybdopterin + GTP + H(+) = Mo-molybdopterin guanine dinucleotide + diphosphate. Its function is as follows. Transfers a GMP moiety from GTP to Mo-molybdopterin (Mo-MPT) cofactor (Moco or molybdenum cofactor) to form Mo-molybdopterin guanine dinucleotide (Mo-MGD) cofactor. In Pseudomonas aeruginosa (strain ATCC 15692 / DSM 22644 / CIP 104116 / JCM 14847 / LMG 12228 / 1C / PRS 101 / PAO1), this protein is Molybdenum cofactor guanylyltransferase.